The chain runs to 286 residues: Acetyl-coenzyme A carboxylase carboxyl transferase subunit beta (286 aa).

Residues 28–286 (LMQKCSNCKK…KMHMDGRQLK (259 aa)) enclose the CoA carboxyltransferase N-terminal domain. The Zn(2+) site is built by C32, C35, C51, and C54. The C4-type zinc-finger motif lies at 32–54 (CSNCKKIYYRKEMVKALQVCPNC).

The protein belongs to the AccD/PCCB family. As to quaternary structure, acetyl-CoA carboxylase is a heterohexamer composed of biotin carboxyl carrier protein (AccB), biotin carboxylase (AccC) and two subunits each of ACCase subunit alpha (AccA) and ACCase subunit beta (AccD). Zn(2+) is required as a cofactor.

The protein resides in the cytoplasm. It catalyses the reaction N(6)-carboxybiotinyl-L-lysyl-[protein] + acetyl-CoA = N(6)-biotinyl-L-lysyl-[protein] + malonyl-CoA. Its pathway is lipid metabolism; malonyl-CoA biosynthesis; malonyl-CoA from acetyl-CoA: step 1/1. Component of the acetyl coenzyme A carboxylase (ACC) complex. Biotin carboxylase (BC) catalyzes the carboxylation of biotin on its carrier protein (BCCP) and then the CO(2) group is transferred by the transcarboxylase to acetyl-CoA to form malonyl-CoA. In Oceanobacillus iheyensis (strain DSM 14371 / CIP 107618 / JCM 11309 / KCTC 3954 / HTE831), this protein is Acetyl-coenzyme A carboxylase carboxyl transferase subunit beta.